The following is a 183-amino-acid chain: Ras-related protein Rap-2a (183 aa).

10–17 contributes to the GTP binding site; it reads GSGGVGKS. The Effector region signature appears at 32-40; that stretch reads YDPTIEDFY. Thr35 is a glycosylation site ((Microbial infection) O-linked (Glc) threonine; by C.difficile toxin TcdA, and by P.sordellii toxin TcsL). Residues 57–61 and 116–119 each bind GTP; these read DTAGT and NKVD. Residues Cys176 and Cys177 are each lipidated (S-palmitoyl cysteine). At Cys180 the chain carries Cysteine methyl ester. Cys180 carries S-farnesyl cysteine lipidation. A propeptide spans 181 to 183 (removed in mature form); it reads NIQ.

It belongs to the small GTPase superfamily. Ras family. In terms of assembly, interacts (GTP-bound form) with RUNDC3A. Interacts with RGS14; the interaction is GTP-dependent. Interacts with PLCE1. Interacts with ARHGAP29, SGSM1, SGSM2 and SGSM3. Interacts (GTP-bound form preferentially) with TNIK (via the CNH domain); the interaction is direct and recruits RAP2A to the E3 ubiquitin ligase NEDD4. Interacts with MINK1. Interacts (GTP-bound form preferentially) with MAP4K4. Interacts with cytoskeletal actin. Post-translationally, ubiquitinated; undergoes 'Lys-63' monoubiquitination and diubiquitination by NEDD4. Multiple lysine residues are probably modified. Ubiquitination requires TNIK, prevents interaction with effectors and inactivates RAP2A. Ubiquitination by the ECS(RAB40B) complex leads to RAP2A localization to lamellipodia plasma membrane, activation, and regulation of sorting at early endosomes for recycling to the lamellipodia plasma membrane. In terms of processing, palmitoylated. Palmitoylation is required for association with recycling endosome membranes and activation of TNIK. (Microbial infection) Glucosylated at Thr-35 by C.difficile toxin TcdA in the colonic epithelium, and by P.sordellii toxin TcsL in the vascular endothelium.

It localises to the midbody. It is found in the cell projection. The protein localises to the lamellipodium membrane. The protein resides in the golgi apparatus. Its subcellular location is the recycling endosome membrane. It localises to the lysosome. It carries out the reaction GTP + H2O = GDP + phosphate + H(+). Its activity is regulated as follows. Activated by the guanine nucleotide-exchange factors RAPGEF3 and RAPGEF4 in a cAMP-dependent manner. Nucleotide exchange is also specifically stimulated by RAPGEF5, RASGEF1A and RASGEF1B. Small GTP-binding protein which cycles between a GDP-bound inactive and a GTP-bound active form. In its active form interacts with and regulates several effectors including MAP4K4, MINK1 and TNIK. Part of a signaling complex composed of NEDD4, RAP2A and TNIK which regulates neuronal dendrite extension and arborization during development. More generally, it is part of several signaling cascades and regulates cytoskeletal rearrangements, cell migration, cell adhesion and cell spreading. This is Ras-related protein Rap-2a from Homo sapiens (Human).